The sequence spans 287 residues: Protoheme IX farnesyltransferase (287 aa).

7 helical membrane passes run 19-39 (LMVAGATFFGAMLAVPHVTIT), 100-120 (MVLCLAGGLTSLLVGIGIVAV), 134-154 (FALLVGAAAGAMPPVVGWLAV), 162-182 (MLVVVYTLYLLWQIPHFWLHA), 212-232 (VWFHAYAVAVLMVPAFPLLEW), 233-253 (VGMRIMVTLCGIALLFAAMLA), and 267-287 (VLCAVMVVLLIDRLAIPVSLF).

It belongs to the UbiA prenyltransferase family. Protoheme IX farnesyltransferase subfamily.

It localises to the cell inner membrane. The catalysed reaction is heme b + (2E,6E)-farnesyl diphosphate + H2O = Fe(II)-heme o + diphosphate. Its pathway is porphyrin-containing compound metabolism; heme O biosynthesis; heme O from protoheme: step 1/1. Converts heme B (protoheme IX) to heme O by substitution of the vinyl group on carbon 2 of heme B porphyrin ring with a hydroxyethyl farnesyl side group. This is Protoheme IX farnesyltransferase from Nitratidesulfovibrio vulgaris (strain ATCC 29579 / DSM 644 / CCUG 34227 / NCIMB 8303 / VKM B-1760 / Hildenborough) (Desulfovibrio vulgaris).